We begin with the raw amino-acid sequence, 364 residues long: Threonine-phosphate decarboxylase (364 aa).

O-phospho-L-threonine is bound by residues 8-9 (HG), Asn32, and Asn157. Lys216 bears the N6-(pyridoxal phosphate)lysine mark. Arg323 and Arg337 together coordinate O-phospho-L-threonine.

It belongs to the class-II pyridoxal-phosphate-dependent aminotransferase family. Homodimer. Pyridoxal 5'-phosphate is required as a cofactor.

It catalyses the reaction O-phospho-L-threonine + H(+) = (R)-1-aminopropan-2-yl phosphate + CO2. The protein operates within cofactor biosynthesis; adenosylcobalamin biosynthesis. Functionally, decarboxylates L-threonine-O-3-phosphate to yield (R)-1-amino-2-propanol O-2-phosphate, the precursor for the linkage between the nucleotide loop and the corrin ring in cobalamin. The polypeptide is Threonine-phosphate decarboxylase (cobD) (Salmonella typhimurium (strain LT2 / SGSC1412 / ATCC 700720)).